We begin with the raw amino-acid sequence, 1239 residues long: Zinc finger and BTB domain-containing protein 40 (1239 aa).

The BTB domain maps to 24–87 (CDCTISIGTI…MYTGKLPVGK (64 aa)). Disordered regions lie at residues 130–231 (SAPS…TSTE), 687–732 (HLEA…PDPA), and 779–801 (KELDKHQLEAHGAGGEPDAPKKK). Over residues 136–145 (TFRKEPEKPQ) the composition is skewed to basic and acidic residues. Residues 181–199 (SVSQEMSVNSPTAQESQRN) show a composition bias toward polar residues. The residue at position 190 (Ser190) is a Phosphoserine. Residues 200–212 (AETPAETPTTAEA) show a composition bias toward low complexity. The span at 687 to 703 (HLEANNKEDEKAAKEDS) shows a compositional bias: basic and acidic residues. A Phosphoserine modification is found at Ser703. Residues 705–719 (PGEQNDQGETGSLPG) show a composition bias toward polar residues. C2H2-type zinc fingers lie at residues 807–830 (VTCDLCGREFAHASGMQYHKLTEH), 836–858 (FSCEECGAKFAANSTLKNHLRLH), 864–887 (FMCKHCLMTFTQASALAYHTKKKH), 893–915 (YACQYCDAVFAQSIELSRHVRTH), 921–944 (YVCRDCGKGFRQANGLSIHLHTFH), 950–973 (YDCKKCRMSFPTLQDHRKHIHEVH), 978–1000 (HPCPTCGKIFSAPSMLERHVVTH), 1006–1029 (FSCGICNKAYQQLSGLWYHNRTHH), 1046–1069 (LQCSSCDKTFPNTIEHKKHIKAEH), and 1075–1098 (HECDQCKELFPTPALLQVHVKCQH). Lys1066 participates in a covalent cross-link: Glycyl lysine isopeptide (Lys-Gly) (interchain with G-Cter in SUMO2). The C2H2-type 11; atypical zinc-finger motif lies at 1104 to 1127 (FRCLYCAATFRFPGALQHHVTTEH). The C2H2-type 12 zinc-finger motif lies at 1135–1158 (FPCELCGELFTSQAQLDSHLESEH).

This sequence belongs to the krueppel C2H2-type zinc-finger protein family.

The protein resides in the nucleus. In terms of biological role, may be involved in transcriptional regulation. In Homo sapiens (Human), this protein is Zinc finger and BTB domain-containing protein 40 (ZBTB40).